The following is an 816-amino-acid chain: Sucrose synthase 1 (816 aa).

Residues 280–757 (MVFNVVIMSP…GLQRIEEKYT (478 aa)) form a GT-B glycosyltransferase region.

Belongs to the glycosyltransferase 1 family. Plant sucrose synthase subfamily. In terms of assembly, homotetramer or heterotetramer with SUS2. Expressed in root phloem and leaf mesophyll. Expressed in phloem tissues and aleurone layers of seeds and at lower levels in the pericarp and endosperm cells (at protein level). Predominantly expressed in elongating tissues including roots, developing leaves and internodes.

The catalysed reaction is an NDP-alpha-D-glucose + D-fructose = a ribonucleoside 5'-diphosphate + sucrose + H(+). Its function is as follows. Sucrose-cleaving enzyme that provides UDP-glucose and fructose for various metabolic pathways. This chain is Sucrose synthase 1 (SUS1), found in Oryza sativa subsp. japonica (Rice).